Consider the following 357-residue polypeptide: AA9 family lytic polysaccharide monooxygenase B (357 aa).

An N-terminal signal peptide occupies residues 1-18 (MKFSSVLALAASAKLVAS). Positions 19 and 101 each coordinate Cu(2+). Residues 19 to 234 (HATVFAVWIN…IPGPAVWDGA (216 aa)) form a catalytic region. Cysteine 61 and cysteine 182 are disulfide-bonded. Residues histidine 168 and glutamine 177 each contribute to the O2 site. Tyrosine 179 serves as a coordination point for Cu(2+). A ser/Thr-rich linker region spans residues 235-318 (SSGSGSSGSG…SAAPTGGTGT (84 aa)). The tract at residues 292-317 (SVRPTTSAAPTTSAPTSSAAPTGGTG) is disordered. Residues 295-313 (PTTSAAPTTSAPTSSAAPT) show a composition bias toward low complexity. The 37-residue stretch at 319–355 (GSIQIYQQCGGMNYKGATGCASGLTCKQWNPYYHQCV) folds into the CBM1 domain.

This sequence belongs to the polysaccharide monooxygenase AA9 family. It depends on Cu(2+) as a cofactor.

It is found in the secreted. The enzyme catalyses [(1-&gt;4)-beta-D-glucosyl]n+m + reduced acceptor + O2 = 4-dehydro-beta-D-glucosyl-[(1-&gt;4)-beta-D-glucosyl]n-1 + [(1-&gt;4)-beta-D-glucosyl]m + acceptor + H2O.. Lytic polysaccharide monooxygenase (LPMO) that depolymerizes crystalline and amorphous polysaccharides via the oxidation of scissile alpha- or beta-(1-4)-glycosidic bonds, yielding C4 oxidation products. Catalysis by LPMOs requires the reduction of the active-site copper from Cu(II) to Cu(I) by a reducing agent and H(2)O(2) or O(2) as a cosubstrate. Active on carboxymethylcellulose (CMC), hydroxyethylcellulose (HEC) and beta-glucan. Also active on soluble cellohexaose, a property that is restricted to only a few characterized LPMOs. In Emericella nidulans (strain FGSC A4 / ATCC 38163 / CBS 112.46 / NRRL 194 / M139) (Aspergillus nidulans), this protein is AA9 family lytic polysaccharide monooxygenase B.